Here is a 160-residue protein sequence, read N- to C-terminus: S-adenosylmethionine decarboxylase proenzyme (160 aa).

The active-site Schiff-base intermediate with substrate; via pyruvic acid is S73. Pyruvic acid (Ser); by autocatalysis is present on S73. The active-site Proton acceptor; for processing activity is the H78. Catalysis depends on C93, which acts as the Proton donor; for catalytic activity.

It belongs to the prokaryotic AdoMetDC family. Type 1 subfamily. As to quaternary structure, heterotetramer of two alpha and two beta chains arranged as a dimer of alpha/beta heterodimers. Requires pyruvate as cofactor. Is synthesized initially as an inactive proenzyme. Formation of the active enzyme involves a self-maturation process in which the active site pyruvoyl group is generated from an internal serine residue via an autocatalytic post-translational modification. Two non-identical subunits are generated from the proenzyme in this reaction, and the pyruvate is formed at the N-terminus of the alpha chain, which is derived from the carboxyl end of the proenzyme. The post-translation cleavage follows an unusual pathway, termed non-hydrolytic serinolysis, in which the side chain hydroxyl group of the serine supplies its oxygen atom to form the C-terminus of the beta chain, while the remainder of the serine residue undergoes an oxidative deamination to produce ammonia and the pyruvoyl group blocking the N-terminus of the alpha chain.

It carries out the reaction S-adenosyl-L-methionine + H(+) = S-adenosyl 3-(methylsulfanyl)propylamine + CO2. It participates in amine and polyamine biosynthesis; S-adenosylmethioninamine biosynthesis; S-adenosylmethioninamine from S-adenosyl-L-methionine: step 1/1. Its function is as follows. Catalyzes the decarboxylation of S-adenosylmethionine to S-adenosylmethioninamine (dcAdoMet), the propylamine donor required for the synthesis of the polyamines spermine and spermidine from the diamine putrescine. The protein is S-adenosylmethionine decarboxylase proenzyme of Pseudomonas paraeruginosa (strain DSM 24068 / PA7) (Pseudomonas aeruginosa (strain PA7)).